We begin with the raw amino-acid sequence, 156 residues long: Arginine repressor (156 aa).

The protein belongs to the ArgR family.

Its subcellular location is the cytoplasm. It functions in the pathway amino-acid biosynthesis; L-arginine biosynthesis [regulation]. Its function is as follows. Regulates arginine biosynthesis genes. This is Arginine repressor from Shewanella piezotolerans (strain WP3 / JCM 13877).